We begin with the raw amino-acid sequence, 444 residues long: tRNA modification GTPase MnmE (444 aa).

The (6S)-5-formyl-5,6,7,8-tetrahydrofolate site is built by Arg-24, Glu-81, and Lys-121. A TrmE-type G domain is found at 218–368 (GLTVVIAGPP…LLDALVGFAR (151 aa)). GTP contacts are provided by residues 228 to 233 (NAGKST), 247 to 253 (SPQAGTT), 272 to 275 (DTAG), and 349 to 351 (SAR). Residues Ser-232 and Thr-253 each contribute to the Mg(2+) site. Lys-444 serves as a coordination point for (6S)-5-formyl-5,6,7,8-tetrahydrofolate.

Belongs to the TRAFAC class TrmE-Era-EngA-EngB-Septin-like GTPase superfamily. TrmE GTPase family. In terms of assembly, homodimer. Heterotetramer of two MnmE and two MnmG subunits. K(+) is required as a cofactor.

Its subcellular location is the cytoplasm. In terms of biological role, exhibits a very high intrinsic GTPase hydrolysis rate. Involved in the addition of a carboxymethylaminomethyl (cmnm) group at the wobble position (U34) of certain tRNAs, forming tRNA-cmnm(5)s(2)U34. This is tRNA modification GTPase MnmE from Bradyrhizobium sp. (strain ORS 278).